Here is a 152-residue protein sequence, read N- to C-terminus: Ribosome maturation factor RimP (152 aa).

It belongs to the RimP family.

Its subcellular location is the cytoplasm. In terms of biological role, required for maturation of 30S ribosomal subunits. The sequence is that of Ribosome maturation factor RimP from Burkholderia vietnamiensis (strain G4 / LMG 22486) (Burkholderia cepacia (strain R1808)).